A 241-amino-acid chain; its full sequence is NH(3)-dependent NAD(+) synthetase (241 aa).

An ATP-binding site is contributed by 27–34; that stretch reads GISGGIDS. D33 serves as a coordination point for Mg(2+). A deamido-NAD(+)-binding site is contributed by R109. Residue T129 coordinates ATP. Mg(2+) is bound at residue E134. K142 and D149 together coordinate deamido-NAD(+). The ATP site is built by K158 and T180. 231 to 232 provides a ligand contact to deamido-NAD(+); the sequence is HK.

This sequence belongs to the NAD synthetase family. As to quaternary structure, homodimer.

It carries out the reaction deamido-NAD(+) + NH4(+) + ATP = AMP + diphosphate + NAD(+) + H(+). The protein operates within cofactor biosynthesis; NAD(+) biosynthesis; NAD(+) from deamido-NAD(+) (ammonia route): step 1/1. Its function is as follows. Catalyzes the ATP-dependent amidation of deamido-NAD to form NAD. Uses ammonia as a nitrogen source. In Thermoplasma acidophilum (strain ATCC 25905 / DSM 1728 / JCM 9062 / NBRC 15155 / AMRC-C165), this protein is NH(3)-dependent NAD(+) synthetase.